We begin with the raw amino-acid sequence, 231 residues long: Aminodeoxyfutalosine nucleosidase (231 aa).

Residue Glu14 is the Proton acceptor of the active site. Residues Gly81, Val155, and 175 to 176 (ME) each bind substrate. The active-site Proton donor is the Asp199.

This sequence belongs to the PNP/UDP phosphorylase family. In terms of assembly, homodimer.

It catalyses the reaction 6-amino-6-deoxyfutalosine + H2O = dehypoxanthine futalosine + adenine. The enzyme catalyses S-adenosyl-L-homocysteine + H2O = S-(5-deoxy-D-ribos-5-yl)-L-homocysteine + adenine. The catalysed reaction is S-methyl-5'-thioadenosine + H2O = 5-(methylsulfanyl)-D-ribose + adenine. It carries out the reaction 5'-deoxyadenosine + H2O = 5-deoxy-D-ribose + adenine. Its pathway is quinol/quinone metabolism; menaquinone biosynthesis. It participates in amino-acid biosynthesis; L-methionine biosynthesis via salvage pathway; S-methyl-5-thio-alpha-D-ribose 1-phosphate from S-methyl-5'-thioadenosine (hydrolase route): step 1/2. Its function is as follows. Catalyzes the direct conversion of aminodeoxyfutalosine (AFL) into dehypoxanthine futalosine (DHFL) and adenine via the hydrolysis of the N-glycosidic bond; this reaction seems to represent an essential step in the menaquinone biosynthesis pathway in Helicobacter species. Can also probably catalyzes the hydrolysis of 5'-methylthioadenosine (MTA) and S-adenosylhomocysteine (SAH) to adenine and the corresponding thioribose, 5'-methylthioribose and S-ribosylhomocysteine, respectively. These other activities highlight the tremendous versatility of the enzyme, which also plays key roles in S-adenosylmethionine recycling and in the biosynthesis of the quorum-sensing molecule autoinducer-2. Does not act on futalosine (FL) as substrate. The chain is Aminodeoxyfutalosine nucleosidase (mtnN) from Helicobacter pylori (strain ATCC 700392 / 26695) (Campylobacter pylori).